Reading from the N-terminus, the 838-residue chain is MKYDFKSVEKFYQDKWDFSVSKSGKQEKCYVLEMFPYPSGKIHMGHLRNYAIGDVIARYKRANGFEVLHPIGWDAFGLPAENAARDNNISPETWTKENIDNMRTQLKSIGLSYNWERELSTCEPDYYKHEQKFFLDFLKHGLAYRKESWVNWDPVDQTVLANEQVVDGKGWRSGAVVEKRKLSQWFLKITDFAEDLLKCLQSLKNWPEKVKTMQERWIGKSEGATIEFEVVGLNKKLKVFTTYPHTLFGASFCAVAAEHPIVQDLKNGSSVVIPVLDTGIQEIKSKRENDEKIGVYTGLNVKHPFLDKELPLYIANFVLMEYGEGAIFGCPAHDQRDFEFAQKYNLPIIPVISSAHLGVIPARDQNSYNGSQCQATQMTKEAYTGDGTMFNSEFLNGLMVSEAKEAIVKKFEEKKIGKKTINYRLHDWGVSRQRYWGCPIPIIYCKDCGTVPVPEKDLPVVLPIDVEFTSGGNPLDKHPTWKFVDCPKCGKQAERETDTFDTFFESSWYFAAFCSEDKSIDKDACNRFMPVDYYIGGIEHAILHLLYSRFFCRALTKCGYFDIKEPFSTLITQGMVCHATYKDENGKWLFPAEAKELIARGAKVQVGKVEKMSKSKKNTVDPNFIIEKYGADTARLFVLSDTPPEKDMEWSDDGVEGCSRYVNKLWRMVMQLRPVNIHYDNENVTGGLLEYRKKIHKLLHGLTDDLENCRLNCVVAKFREMTNLIAEIDVKTGKSLIDEGICILIRVIEPFIPHLAESLWQEIGGQPWPKADESLLVDDTVTIAVQINGKLRTTIKVAINLPQEELKKIAIDSVSSKIDQSKVRTVYAVPNKIVNIVI.

Positions 36–46 (PYPSGKIHMGH) match the 'HIGH' region motif. The short motif at 611–615 (KMSKS) is the 'KMSKS' region element. Lys-614 serves as a coordination point for ATP.

It belongs to the class-I aminoacyl-tRNA synthetase family.

It is found in the cytoplasm. It catalyses the reaction tRNA(Leu) + L-leucine + ATP = L-leucyl-tRNA(Leu) + AMP + diphosphate. This chain is Leucine--tRNA ligase, found in Wolbachia pipientis wMel.